An 802-amino-acid chain; its full sequence is Chromosome alignment-maintaining phosphoprotein 1 (802 aa).

N-acetylmethionine is present on methionine 1. Residues 88–105 (SDKWSEQPKEQPSKDTES) show a composition bias toward basic and acidic residues. Positions 88–475 (SDKWSEQPKE…PDLWKSSFIM (388 aa)) are disordered. Phosphoserine is present on serine 108. The span at 135-148 (QKTSPSLCPESQAS) shows a compositional bias: polar residues. A compositionally biased stretch (basic and acidic residues) spans 185 to 203 (ERVDPPCELPELEKPERGP). 15 positions are modified to phosphoserine: serine 204, serine 207, serine 234, serine 237, serine 243, serine 252, serine 254, serine 265, serine 272, serine 276, serine 298, serine 309, serine 334, serine 345, and serine 365. Residues 261–479 (ARTASPEPRK…KSSFIMESQK (219 aa)) form a mediates interaction with MAD2L2 region. Residues 332–351 (PMSPGPWKPIPSVSPGPWKP) show a composition bias toward pro residues. Residues 354–368 (SMSTASWKSSVSSGS) show a composition bias toward low complexity. Positions 369 to 378 (WKTPPTSPES) are enriched in polar residues. Threonine 371 carries the phosphothreonine modification. Phosphoserine is present on residues serine 375, serine 394, serine 405, serine 416, serine 421, serine 425, serine 432, serine 434, and serine 441. The interval 440–580 (VSPDQRKTSP…EIQLEAVDNA (141 aa)) is mediates localization to the spindle and the kinetochore and is required for the attachment of spindle microtubules to the kinetochore. Position 447 is a phosphothreonine (threonine 447). Serine 448, serine 451, and serine 461 each carry phosphoserine. Lysine 479 carries the N6-acetyllysine; alternate modification. Lysine 479 is covalently cross-linked (Glycyl lysine isopeptide (Lys-Gly) (interchain with G-Cter in SUMO2); alternate). A phosphoserine mark is found at serine 497, serine 502, and serine 532. Lysine 555 participates in a covalent cross-link: Glycyl lysine isopeptide (Lys-Gly) (interchain with G-Cter in SUMO2). Residues 581–802 (KCDSLAQEGL…LESPLEEQQI (222 aa)) are mediates localization to the chromosome and the spindle and negatively regulates chromosome alignment. Threonine 593 is modified (phosphothreonine). A Glycyl lysine isopeptide (Lys-Gly) (interchain with G-Cter in SUMO2) cross-link involves residue lysine 596. 7 positions are modified to phosphoserine: serine 603, serine 605, serine 617, serine 622, serine 641, serine 642, and serine 643. The segment at 603–625 (SPSSKKLKKDSQENSDAELSSSE) is disordered. A Glycyl lysine isopeptide (Lys-Gly) (interchain with G-Cter in SUMO2) cross-link involves residue lysine 660. Serine 665 is subject to Phosphoserine. Lysine 679 is covalently cross-linked (Glycyl lysine isopeptide (Lys-Gly) (interchain with G-Cter in SUMO2)). At serine 726 the chain carries Phosphoserine. The C2H2-type zinc finger occupies 728–750 (YKCTICGKAFLLESLLKNHVAAH).

In terms of assembly, interacts with MAD2L2. Interacts with POGZ, CBX1, CBX3 and CBX5. Post-translationally, phosphorylated by CDK1. Mitotic phosphorylation is required for the attachment of spindle microtubules to the kinetochore.

The protein resides in the nucleus. It is found in the chromosome. It localises to the centromere. The protein localises to the kinetochore. Its subcellular location is the cytoplasm. The protein resides in the cytoskeleton. It is found in the spindle. In terms of biological role, required for proper alignment of chromosomes at metaphase and their accurate segregation during mitosis. Involved in the maintenance of spindle microtubules attachment to the kinetochore during sister chromatid biorientation. May recruit CENPE and CENPF to the kinetochore. This Mus musculus (Mouse) protein is Chromosome alignment-maintaining phosphoprotein 1 (Champ1).